A 676-amino-acid polypeptide reads, in one-letter code: Palmitoyl-CoA ligase FUM16 (676 aa).

245 to 256 (IMYTSGSTGLPN) is a binding site for AMP. The tract at residues 552-655 (KLESIYRTSQ…SGLVTPTMKL (104 aa)) is AMP-binding.

The protein belongs to the ATP-dependent AMP-binding enzyme family.

It localises to the endoplasmic reticulum. It participates in mycotoxin biosynthesis. Its function is as follows. Palmitoyl-CoA ligase; part of the gene cluster that mediates the biosynthesis of fumonisins B1 (FB1), B2 (FB2), B3 (FB3), and B4 (FB4), which are carcinogenic mycotoxins. Plays a role in the synthesis of ceramide and is involved in self-protection from fumonisin B1 toxicity. The biosynthesis starts with the FUM1-catalyzed carbon chain assembly from one molecule of acetyl-CoA, eight molecules of malonyl-CoA, and two molecules of methionine (in S-adenosyl form). The C18 polyketide chain is released from the enzyme by a nucleophilic attack of a carbanion, which is derived from R-carbon of alanine by decarboxylation, on the carbonyl carbon of polyketide acyl chain. This step is catalyzed by the pyridoxal 5'-phosphate-dependent aminoacyl transferase FUM8. The resultant 3-keto intermediate is then stereospecifically reduced to a 3-hydroxyl product by reductase FUM13. Subsequent oxidations at C-10 by the cytochrome P450 monooxygenase FUM2, C-14 and C-15 by FUM6, FUM12 or FUM15, tricarballylic esterification of the hydroxyl groups on C-14 and C-15 by acyltransferase FUM14, and C-5 hydroxylation by 2-keto-glutarate-dependent dioxygenase FUM3 furnish the biosynthesis of fumonisins. The tricarballylic moieties are most likely derived from the citric acid cycle, and their addition to the carbon backbone may involve FUM7, FUM10, FUM11 and FUM14. This chain is Palmitoyl-CoA ligase FUM16, found in Gibberella moniliformis (strain M3125 / FGSC 7600) (Maize ear and stalk rot fungus).